Consider the following 746-residue polypeptide: Proline--tRNA ligase (746 aa).

A required for editing of incorrectly charged tRNA region spans residues Met-1–Asn-223. The segment covering Thr-181–Glu-201 has biased composition (basic and acidic residues). A disordered region spans residues Thr-181–Ile-226. Residues Asn-204–Asn-224 are compositionally biased toward low complexity. Position 390 (Arg-390) interacts with L-proline. ATP is bound by residues Arg-390–Lys-394, Arg-401–Phe-405, and Gln-475–Ala-477. His-480 lines the L-proline pocket. Residue Thr-512–Arg-514 participates in ATP binding.

It belongs to the class-II aminoacyl-tRNA synthetase family. ProS type 3 subfamily. As to quaternary structure, homodimer.

It localises to the cytoplasm. It carries out the reaction tRNA(Pro) + L-proline + ATP = L-prolyl-tRNA(Pro) + AMP + diphosphate. Inhibited by the quinazolinone-based compound febrifugine from the Chinese plant Dichroa febrifuga which is used to treat malaria-associated fever. Also inhibited by febrifugine derivatives such as halofuginone. Functionally, catalyzes the attachment of proline to tRNA(Pro) in a two-step reaction: proline is first activated by ATP to form Pro-AMP and then transferred to the acceptor end of tRNA(Pro). Functions in trans to edit the amino acid moiety from incorrectly charged Ala-tRNA(Pro). Has no activity on correctly charged Pro-tRNA(Pro) or Ala-tRNA(Ala). This is Proline--tRNA ligase from Plasmodium falciparum (isolate 3D7).